The primary structure comprises 228 residues: Ribose-5-phosphate isomerase A (228 aa).

Residues 29-32 (TGST), 84-87 (DGAD), and 97-100 (KGGG) each bind substrate. Glu106 acts as the Proton acceptor in catalysis. Lys124 contacts substrate.

It belongs to the ribose 5-phosphate isomerase family. Homodimer.

It carries out the reaction aldehydo-D-ribose 5-phosphate = D-ribulose 5-phosphate. It participates in carbohydrate degradation; pentose phosphate pathway; D-ribose 5-phosphate from D-ribulose 5-phosphate (non-oxidative stage): step 1/1. In terms of biological role, catalyzes the reversible conversion of ribose-5-phosphate to ribulose 5-phosphate. The polypeptide is Ribose-5-phosphate isomerase A (Sphingopyxis alaskensis (strain DSM 13593 / LMG 18877 / RB2256) (Sphingomonas alaskensis)).